The following is a 527-amino-acid chain: Glutamyl-tRNA reductase 1, chloroplastic (527 aa).

Residues 1–43 (MAGATSATAAAGAFAAAKARGPAAACPWLVAAGGRRRSGVVRC) constitute a chloroplast transit peptide. Residues 124–127 (TCNR), Ser-184, 189–191 (EGQ), and Gln-195 each bind substrate. Cys-125 serves as the catalytic Nucleophile. 266–271 (GAGKMG) lines the NADP(+) pocket.

It belongs to the glutamyl-tRNA reductase family. Homodimer.

It localises to the plastid. The protein localises to the chloroplast. The enzyme catalyses (S)-4-amino-5-oxopentanoate + tRNA(Glu) + NADP(+) = L-glutamyl-tRNA(Glu) + NADPH + H(+). Its pathway is porphyrin-containing compound metabolism; protoporphyrin-IX biosynthesis; 5-aminolevulinate from L-glutamyl-tRNA(Glu): step 1/2. Catalyzes the NADPH-dependent reduction of glutamyl-tRNA(Glu) to glutamate 1-semialdehyde (GSA). This chain is Glutamyl-tRNA reductase 1, chloroplastic (HEMA1), found in Hordeum vulgare (Barley).